The sequence spans 154 residues: 3-hydroxyacyl-[acyl-carrier-protein] dehydratase FabZ (154 aa).

The active site involves histidine 60.

This sequence belongs to the thioester dehydratase family. FabZ subfamily.

Its subcellular location is the cytoplasm. It catalyses the reaction a (3R)-hydroxyacyl-[ACP] = a (2E)-enoyl-[ACP] + H2O. Its function is as follows. Involved in unsaturated fatty acids biosynthesis. Catalyzes the dehydration of short chain beta-hydroxyacyl-ACPs and long chain saturated and unsaturated beta-hydroxyacyl-ACPs. The sequence is that of 3-hydroxyacyl-[acyl-carrier-protein] dehydratase FabZ from Synechococcus sp. (strain CC9311).